A 321-amino-acid chain; its full sequence is Proline-rich protein 2 (321 aa).

A signal peptide spans 1–26; sequence MRILPKSGGGALCLLFVFALCSVAHS. Repeat copies occupy residues 168-172, 173-176, 177-181, 185-189, 190-194, 198-202, 207-211, 212-217, 218-223, 225-229, 234-238, 240-244, 245-251, 252-256, 262-266, 267-271, 272-276, 277-281, 282-286, 288-292, 293-297, 298-302, 303-307, and 315-319. Residues 168 to 319 form a 24 X 5 AA approximate repeats region; sequence PPLNLPPLTF…KFGKWPPFPS (152 aa).

Belongs to the plant proline-rich protein superfamily. Mostly expressed in aerial organs, particularly in expanding leaves, stems, flowers, and siliques.

Its subcellular location is the secreted. It is found in the cell wall. This Arabidopsis thaliana (Mouse-ear cress) protein is Proline-rich protein 2 (PRP2).